We begin with the raw amino-acid sequence, 202 residues long: IMP cyclohydrolase (202 aa).

The protein belongs to the archaeal IMP cyclohydrolase family.

It carries out the reaction IMP + H2O = 5-formamido-1-(5-phospho-D-ribosyl)imidazole-4-carboxamide. Its pathway is purine metabolism; IMP biosynthesis via de novo pathway; IMP from 5-formamido-1-(5-phospho-D-ribosyl)imidazole-4-carboxamide: step 1/1. Functionally, catalyzes the cyclization of 5-formylamidoimidazole-4-carboxamide ribonucleotide to IMP. The sequence is that of IMP cyclohydrolase (purO) from Methanocaldococcus jannaschii (strain ATCC 43067 / DSM 2661 / JAL-1 / JCM 10045 / NBRC 100440) (Methanococcus jannaschii).